The sequence spans 220 residues: Ribosomal RNA small subunit methyltransferase G 1 (220 aa).

Positions 79, 84, and 150 each coordinate S-adenosyl-L-methionine.

It belongs to the methyltransferase superfamily. RNA methyltransferase RsmG family.

It is found in the cytoplasm. The enzyme catalyses guanosine(527) in 16S rRNA + S-adenosyl-L-methionine = N(7)-methylguanosine(527) in 16S rRNA + S-adenosyl-L-homocysteine. In terms of biological role, specifically methylates the N7 position of guanine in position 527 of 16S rRNA. The polypeptide is Ribosomal RNA small subunit methyltransferase G 1 (Syntrophobacter fumaroxidans (strain DSM 10017 / MPOB)).